A 1228-amino-acid polypeptide reads, in one-letter code: DNA-directed RNA polymerase subunit beta'' (1228 aa).

Cys-222, Cys-296, Cys-303, and Cys-306 together coordinate Zn(2+).

It belongs to the RNA polymerase beta' chain family. RpoC2 subfamily. In plastids the minimal PEP RNA polymerase catalytic core is composed of four subunits: alpha, beta, beta', and beta''. When a (nuclear-encoded) sigma factor is associated with the core the holoenzyme is formed, which can initiate transcription. It depends on Zn(2+) as a cofactor.

It is found in the plastid. It localises to the chloroplast. It catalyses the reaction RNA(n) + a ribonucleoside 5'-triphosphate = RNA(n+1) + diphosphate. In terms of biological role, DNA-dependent RNA polymerase catalyzes the transcription of DNA into RNA using the four ribonucleoside triphosphates as substrates. This is DNA-directed RNA polymerase subunit beta'' from Gracilaria tenuistipitata var. liui (Red alga).